Consider the following 101-residue polypeptide: uncharacterized protein (101 aa).

The signal sequence occupies residues 1-25; the sequence is MISIPFRSTMSRTLVFIILPTVLSC.

This is an uncharacterized protein from Saccharomyces cerevisiae (strain ATCC 204508 / S288c) (Baker's yeast).